The sequence spans 820 residues: Trimethylamine-N-oxide reductase (820 aa).

The segment at residues 1–33 is a signal peptide (tat-type signal); sequence MAITRRSFLKGVATTSAASIIGPSLLTSVSAQA. Position 179 (Ser179) interacts with Mo-bis(molybdopterin guanine dinucleotide).

The protein belongs to the prokaryotic molybdopterin-containing oxidoreductase family. It depends on Mo-bis(molybdopterin guanine dinucleotide) as a cofactor. Post-translationally, predicted to be exported by the Tat system. The position of the signal peptide cleavage has not been experimentally proven.

The protein localises to the periplasm. It catalyses the reaction trimethylamine + 2 Fe(III)-[cytochrome c] + H2O = trimethylamine N-oxide + 2 Fe(II)-[cytochrome c] + 3 H(+). Its function is as follows. Reduces trimethylamine-N-oxide (TMAO) into trimethylamine; an anaerobic reaction coupled to energy-yielding reactions. The sequence is that of Trimethylamine-N-oxide reductase (torA) from Vibrio cholerae serotype O1 (strain ATCC 39315 / El Tor Inaba N16961).